We begin with the raw amino-acid sequence, 479 residues long: 6-phosphogluconate dehydrogenase, decarboxylating (479 aa).

NADP(+) contacts are provided by residues 9-14 (GLAVMG), 32-34 (NRT), 74-76 (IQA), and Asn-102. Residues Asn-102 and 128-130 (SGG) contribute to the substrate site. Residue Lys-182 is the Proton acceptor of the active site. Residue 185-186 (HN) participates in substrate binding. The active-site Proton donor is the Glu-189. Residues Tyr-190, Lys-259, Arg-286, Arg-446, and His-452 each contribute to the substrate site.

It belongs to the 6-phosphogluconate dehydrogenase family. As to quaternary structure, homodimer.

It carries out the reaction 6-phospho-D-gluconate + NADP(+) = D-ribulose 5-phosphate + CO2 + NADPH. It participates in carbohydrate degradation; pentose phosphate pathway; D-ribulose 5-phosphate from D-glucose 6-phosphate (oxidative stage): step 3/3. Its function is as follows. Catalyzes the oxidative decarboxylation of 6-phosphogluconate to ribulose 5-phosphate and CO(2), with concomitant reduction of NADP to NADPH. This chain is 6-phosphogluconate dehydrogenase, decarboxylating (gnd), found in Chlamydia pneumoniae (Chlamydophila pneumoniae).